A 71-amino-acid chain; its full sequence is Large ribosomal subunit protein bL31 (71 aa).

Residues C16, C18, C37, and C40 each contribute to the Zn(2+) site.

It belongs to the bacterial ribosomal protein bL31 family. Type A subfamily. In terms of assembly, part of the 50S ribosomal subunit. The cofactor is Zn(2+).

Binds the 23S rRNA. The polypeptide is Large ribosomal subunit protein bL31 (Pseudomonas aeruginosa (strain LESB58)).